A 291-amino-acid polypeptide reads, in one-letter code: Putative transport permease ycf38 (291 aa).

6 consecutive transmembrane segments (helical) span residues 47 to 67 (ATLM…GGLF), 87 to 107 (SGII…PLMF), 135 to 155 (FMTC…LFMG), 165 to 185 (LIFA…SLAL), 195 to 215 (LLAL…ALAP), and 262 to 282 (ISLG…AYIV). One can recognise an ABC transmembrane type-2 domain in the interval 47–289 (ATLMAGIIQP…YIVSNILKAR (243 aa)).

This sequence belongs to the ABC-2 integral membrane protein family.

The protein localises to the plastid. It is found in the chloroplast membrane. The protein is Putative transport permease ycf38 (ycf38) of Porphyra purpurea (Red seaweed).